Consider the following 966-residue polypeptide: LRR receptor-like serine/threonine-protein kinase ERL1 (966 aa).

The first 25 residues, 1–25 (MKEKMQRMVLSLAMVGFMVFGVASA), serve as a signal peptide directing secretion. The Extracellular segment spans residues 26-582 (MNNEGKALMA…PLPKSRVFSR (557 aa)). One copy of the LRR 1 repeat lies at 40 to 63 (FSNLVNMLLDWDDVHNSDLCSWRG). N-linked (GlcNAc...) asparagine glycosylation is found at Asn-68 and Asn-77. 20 LRR repeats span residues 75–94 (SLNL…IGDL), 95–118 (RNLQ…IGNC), 120–142 (SLVY…ISKL), 143–166 (KQLE…LTQI), 168–190 (NLKR…LYWN), 192–214 (VLQY…MCQL), 215–238 (TGLW…IGNC), 239–261 (TSFQ…NIGF), 262–285 (LQVA…IGLM), 286–311 (QALA…NLSF), 313–333 (GKLY…LGNM), 334–357 (SRLS…LGKL), 359–381 (QLFE…ISSC), 383–404 (ALNQ…AFRN), 405–429 (LGSL…LGHI), 431–453 (NLDK…LGDL), 454–476 (EHLL…EFGN), 478–500 (RSIQ…ELGQ), 501–525 (LQNL…LTNC), and 527–550 (TLVN…NFSR). N-linked (GlcNAc...) asparagine glycosylation is found at Asn-226 and Asn-237. Asn-308 and Asn-332 each carry an N-linked (GlcNAc...) asparagine glycan. The N-linked (GlcNAc...) asparagine glycan is linked to Asn-377. Asn-412, Asn-441, and Asn-460 each carry an N-linked (GlcNAc...) asparagine glycan. N-linked (GlcNAc...) asparagine glycans are attached at residues Asn-532, Asn-537, and Asn-547. Residues 583 to 603 (GALICIVLGVITLLCMIFLAV) traverse the membrane as a helical segment. Residues 604-966 (YKSMQQKKIL…FREVISKSSI (363 aa)) lie on the Cytoplasmic side of the membrane. Phosphothreonine is present on residues Thr-637 and Thr-645. A Protein kinase domain is found at 648 to 921 (LNEKFIIGYG…RVLLSLVPSL (274 aa)). Residues 654 to 662 (IGYGASSTV) and Lys-676 each bind ATP. Residues Tyr-721 and Tyr-760 each carry the phosphotyrosine modification. Asp-773 functions as the Proton acceptor in the catalytic mechanism. Tyr-815 carries the post-translational modification Phosphotyrosine. Thr-823 is modified (phosphothreonine).

The protein belongs to the protein kinase superfamily. Ser/Thr protein kinase family. Homodimer and heterodimer with ERECTA and TMM. Interacts with EPF1 and EPF2. Interacts with SERK1, SERK2, SERK3/BAK1 and SERK4 in a EPF1-induced manner. As to expression, mostly expressed in developing organs, including bud clusters, flowers, siliques and young rosettes. Also detected in mature aboveground organs, such as leaves, stems and pedicels, but barely in roots.

It is found in the cell membrane. It catalyses the reaction L-seryl-[protein] + ATP = O-phospho-L-seryl-[protein] + ADP + H(+). The catalysed reaction is L-threonyl-[protein] + ATP = O-phospho-L-threonyl-[protein] + ADP + H(+). Functionally, receptor kinase that regulates inflorescence architecture and organ shape as well as stomatal patterning, including density and clustering, together with ER and ERL2. Redundantly involved with ER in procambial development regulation. Forms a functional ligand-receptor pair with EPF1 (AC Q8S8I4). Forms a constitutive complex with TMM involved in the recognition of the stomatal regulatory peptides EPF1, EPF2 and EPFL9/STOMAGEN. This is LRR receptor-like serine/threonine-protein kinase ERL1 from Arabidopsis thaliana (Mouse-ear cress).